Here is a 180-residue protein sequence, read N- to C-terminus: MKLLLLSMGLALVCGLQPECSRSEEDLSDEKERKWEQLSRHWHTVVLASSDRSLIEEEGPFRNFIQNITVESGNLNGFFLTRKNGQCIPLYLTAFKTEEARQFKLNYYGTNDVYYGSSKPNEYAKFIFYNYHDGKVNVVANLFGRTPNLSNEIKKRFEEDFMNRGFRRENILDISEVDHC.

Positions 1-15 (MKLLLLSMGLALVCG) are cleaved as a signal peptide. N-linked (GlcNAc...) asparagine glycosylation is found at asparagine 67 and asparagine 148. A disulfide bridge links cysteine 87 with cysteine 180.

It belongs to the calycin superfamily. Lipocalin family. In terms of assembly, homodimer. As to expression, milk.

The protein resides in the secreted. The protein is Trichosurin of Trichosurus vulpecula (Brush-tailed possum).